The following is a 141-amino-acid chain: Lutropin subunit beta (141 aa).

The first 20 residues, 1–20 (MERLQGLLLWLLLSPSVVWA), serve as a signal peptide directing secretion. 6 cysteine pairs are disulfide-bonded: C29–C77, C43–C92, C46–C130, C54–C108, C58–C110, and C113–C120. N33 carries an N-linked (GlcNAc...) asparagine glycan.

The protein belongs to the glycoprotein hormones subunit beta family. Heterodimer of a common alpha chain and a unique beta chain which confers biological specificity to thyrotropin, lutropin, follitropin and gonadotropin.

The protein resides in the secreted. Functionally, promotes spermatogenesis and ovulation by stimulating the testes and ovaries to synthesize steroids. The polypeptide is Lutropin subunit beta (Lhb) (Rattus norvegicus (Rat)).